Here is a 558-residue protein sequence, read N- to C-terminus: T-complex protein 1 subunit gamma (558 aa).

Cys381 and Cys387 are joined by a disulfide.

The protein belongs to the TCP-1 chaperonin family. In terms of assembly, heterooligomeric complex of about 850 to 900 kDa that forms two stacked rings, 12 to 16 nm in diameter.

It is found in the cytoplasm. Molecular chaperone; assists the folding of proteins upon ATP hydrolysis. Known to play a role, in vitro, in the folding of actin and tubulin. The polypeptide is T-complex protein 1 subunit gamma (Thalassiosira weissflogii (Marine diatom)).